Here is a 632-residue protein sequence, read N- to C-terminus: MIKTYDSNEYDVIVVGAGHAGCEAALASAHMGQKTLLVTIGLDMVAFMPCNPSVGGPAKGTVVREIDALGGQMGKNIDATYIQMRMLNTGKGPAVRALRAQADKWQYHEYMKDTIENTPNLTLRQAIVDELVVEDGVCKGVITNTGAKYHAKSVVLTTGTAARGKIIIGELMYSSGPNNTTPSIKLSENLEKLGFKLRRFKTGTPPRVNGNTIDYSKTEEEPGDKVPRHFSYESKDENYLQNQISCWMTYTNPVTHEVIRDNLDRAPMFTGVIKGVGPRYCPSIEDKVVRFADKDRHQIFLEPEGKTTKEVYVGDFSTSMPEEVQLKMVHSVAGLEHAEMMRPGYAIEYDVVEPWQLKHTLETKNVKHLFTAGQMNGTSGYEEAAGQGLIAGINAALSAQGKSGFTLGRNDAYIGVLIDDLVTKGTNEPYRLLTSRAEYRLILRHDNADLRLTEYGHKLGLISDDRYQAFEEKKQAIKDTQARLHEITVHVTDEVQDFLKSIGQEPMKAGVKADVFLRRPHVTINDIERLTGQKIDGDRYVKEQVEIGIKYAGYIKKEETRIARLKRQEAKKIPADIDYNMIEGLATEARQKFEKIRPETLAQAERISGVNPADLAILSVYIQNGRYSRVNK.

Residues 16-21 (GAGHAG), valine 128, and serine 183 contribute to the FAD site. The disordered stretch occupies residues 206–225 (PRVNGNTIDYSKTEEEPGDK). Basic and acidic residues predominate over residues 216-225 (SKTEEEPGDK). Residue 277 to 291 (GPRYCPSIEDKVVRF) participates in NAD(+) binding. An FAD-binding site is contributed by glutamine 374.

Belongs to the MnmG family. Homodimer. Heterotetramer of two MnmE and two MnmG subunits. It depends on FAD as a cofactor.

It localises to the cytoplasm. In terms of biological role, NAD-binding protein involved in the addition of a carboxymethylaminomethyl (cmnm) group at the wobble position (U34) of certain tRNAs, forming tRNA-cmnm(5)s(2)U34. This Lactobacillus acidophilus (strain ATCC 700396 / NCK56 / N2 / NCFM) protein is tRNA uridine 5-carboxymethylaminomethyl modification enzyme MnmG.